A 256-amino-acid polypeptide reads, in one-letter code: Ribosomal RNA small subunit methyltransferase J (256 aa).

S-adenosyl-L-methionine contacts are provided by residues 104–105 (RD), 120–121 (ER), 156–157 (SS), and D174.

It belongs to the methyltransferase superfamily. RsmJ family.

It is found in the cytoplasm. It carries out the reaction guanosine(1516) in 16S rRNA + S-adenosyl-L-methionine = N(2)-methylguanosine(1516) in 16S rRNA + S-adenosyl-L-homocysteine + H(+). Specifically methylates the guanosine in position 1516 of 16S rRNA. The polypeptide is Ribosomal RNA small subunit methyltransferase J (Yersinia pseudotuberculosis serotype O:3 (strain YPIII)).